Consider the following 366-residue polypeptide: MLNIKCIPRKALVLVLGGGMILPNISPAMINDTAGCAGAGISYPYIAGANDNPLFISSDHRPTNNINQVMMMEIIRTINNQTTFQTVRAARHHIIPYQVLRDFYNAVITRGQSNPLELRTFGQILLHLVDNASRLYQNTISLSQLDDARSVALDFMHGVVLGDETRFSEQQVSGLYAIRTLFTWFPANIFIGPDTSYRFDDPGNGFEWNARSIVGAENFNRLEALHNLMVAYINKRNTLDHGWSVIMLARMVSMVSLFKALDNVVTISNAQNWFEPPDWYGDERVGIGFNGRVEYVDVQNLNPPENMRKKRENKNNFIVKRLPTIADPYCLMAPKIVKKKLVASLFTDINPDLNTNKEPKHDELRK.

This chain is Putative protein p9 (9), found in Acyrthosiphon pisum secondary endosymbiont phage 1 (Bacteriophage APSE-1).